The following is a 160-amino-acid chain: 6,7-dimethyl-8-ribityllumazine synthase (160 aa).

5-amino-6-(D-ribitylamino)uracil is bound by residues Phe23, 61–63 (SFE), and 85–87 (AVI). 90–91 (DT) is a binding site for (2S)-2-hydroxy-3-oxobutyl phosphate. His93 functions as the Proton donor in the catalytic mechanism. A 5-amino-6-(D-ribitylamino)uracil-binding site is contributed by Phe118. Position 132 (Arg132) interacts with (2S)-2-hydroxy-3-oxobutyl phosphate.

It belongs to the DMRL synthase family.

It carries out the reaction (2S)-2-hydroxy-3-oxobutyl phosphate + 5-amino-6-(D-ribitylamino)uracil = 6,7-dimethyl-8-(1-D-ribityl)lumazine + phosphate + 2 H2O + H(+). The protein operates within cofactor biosynthesis; riboflavin biosynthesis; riboflavin from 2-hydroxy-3-oxobutyl phosphate and 5-amino-6-(D-ribitylamino)uracil: step 1/2. In terms of biological role, catalyzes the formation of 6,7-dimethyl-8-ribityllumazine by condensation of 5-amino-6-(D-ribitylamino)uracil with 3,4-dihydroxy-2-butanone 4-phosphate. This is the penultimate step in the biosynthesis of riboflavin. The protein is 6,7-dimethyl-8-ribityllumazine synthase of Synechococcus sp. (strain CC9311).